Consider the following 375-residue polypeptide: Alcohol dehydrogenase 1C (375 aa).

Ser2 bears the N-acetylserine mark. The residue at position 23 (Ser23) is a Phosphoserine. Residues Cys47, His68, Cys98, Cys101, Cys104, Cys112, and Cys175 each contribute to the Zn(2+) site. NAD(+)-binding positions include 200–205 (GLGGVG), Asp224, Lys229, Ile270, 293–295 (VGV), 318–320 (AIF), and Arg370.

It belongs to the zinc-containing alcohol dehydrogenase family. In terms of assembly, dimer of identical or non-identical chains of class I alcohol dehydrogenase: ADH1A, ADH1B, and ADH1C. The cofactor is Zn(2+). Expressed in kidney.

The protein resides in the cytoplasm. It catalyses the reaction a primary alcohol + NAD(+) = an aldehyde + NADH + H(+). It carries out the reaction ethanol + NAD(+) = acetaldehyde + NADH + H(+). In terms of biological role, alcohol dehydrogenase. Exhibits high activity for ethanol oxidation and plays a major role in ethanol catabolism. The protein is Alcohol dehydrogenase 1C (ADH1C) of Papio hamadryas (Hamadryas baboon).